A 95-amino-acid chain; its full sequence is Small ribosomal subunit protein uS19 (95 aa).

This sequence belongs to the universal ribosomal protein uS19 family.

Its function is as follows. Protein S19 forms a complex with S13 that binds strongly to the 16S ribosomal RNA. The polypeptide is Small ribosomal subunit protein uS19 (Thermosipho melanesiensis (strain DSM 12029 / CIP 104789 / BI429)).